A 474-amino-acid chain; its full sequence is MTKKLHIKTWGCQMNEYDSSKMADLLDSTHGYQLTDNPEEADVLLLNTCSIREKAQEKVFHQLGRWHMLKEARPELIIGVGGCVASQEGAHIRERANYVDIIFGPQTLHRLPEMINHVNGTRSPVVDISFPEIEKFDRLPEPRAEGPTAFVSIMEGCNKYCSFCVVPYTRGEEVSRPCDDILFEIAQLADQGVREVNLLGQNVNAYRGASYDGGICTFAELLRLVAAIDGIDRIRYITSHPIEFTDDIIDVYRDTPELVSFVHLPVQSGSDRILTMMKRAHTALEYKSIIRRLRKARPDIQISSDFIIGFPGETQQDFEQTMQLIADVNFDMSFSFIYSARPGTPAADMVDNVSEEEKKQRLHILQERITQQAMQYSRRMKGKVQRILVEGTSRKNVMELSGRTENNRVVNFEGAPSMIGKFVDVEIVDVYPNSLRGVLLRTEDQMTLRSHESTASVIARTRKENELGVGMYQP.

The MTTase N-terminal domain occupies 3–120 (KKLHIKTWGC…LPEMINHVNG (118 aa)). C12, C49, C83, C157, C161, and C164 together coordinate [4Fe-4S] cluster. One can recognise a Radical SAM core domain in the interval 143 to 375 (RAEGPTAFVS…QERITQQAMQ (233 aa)). One can recognise a TRAM domain in the interval 378-441 (RRMKGKVQRI…PNSLRGVLLR (64 aa)).

This sequence belongs to the methylthiotransferase family. MiaB subfamily. Monomer. The cofactor is [4Fe-4S] cluster.

The protein localises to the cytoplasm. The catalysed reaction is N(6)-dimethylallyladenosine(37) in tRNA + (sulfur carrier)-SH + AH2 + 2 S-adenosyl-L-methionine = 2-methylsulfanyl-N(6)-dimethylallyladenosine(37) in tRNA + (sulfur carrier)-H + 5'-deoxyadenosine + L-methionine + A + S-adenosyl-L-homocysteine + 2 H(+). Its function is as follows. Catalyzes the methylthiolation of N6-(dimethylallyl)adenosine (i(6)A), leading to the formation of 2-methylthio-N6-(dimethylallyl)adenosine (ms(2)i(6)A) at position 37 in tRNAs that read codons beginning with uridine. The chain is tRNA-2-methylthio-N(6)-dimethylallyladenosine synthase from Sodalis glossinidius (strain morsitans).